The sequence spans 384 residues: Cell division protein FtsZ (384 aa).

Residues 20 to 24 (GGGGN), 107 to 109 (GTG), Glu-138, Arg-142, and Asn-186 each bind GTP.

It belongs to the FtsZ family. In terms of assembly, homodimer. Polymerizes to form a dynamic ring structure in a strictly GTP-dependent manner. Interacts directly with several other division proteins.

Its subcellular location is the cytoplasm. Its function is as follows. Essential cell division protein that forms a contractile ring structure (Z ring) at the future cell division site. The regulation of the ring assembly controls the timing and the location of cell division. One of the functions of the FtsZ ring is to recruit other cell division proteins to the septum to produce a new cell wall between the dividing cells. Binds GTP and shows GTPase activity. This Wigglesworthia glossinidia brevipalpis protein is Cell division protein FtsZ.